We begin with the raw amino-acid sequence, 141 residues long: Hemoglobin subunit alpha-D (141 aa).

The Globin domain occupies 1 to 141; that stretch reads MLGAEETALV…VAAVLAEKYR (141 aa). Residues His58 and His87 each contribute to the heme b site.

The protein belongs to the globin family. In terms of assembly, heterotetramer of two alpha-D chains and two beta chains. In terms of tissue distribution, red blood cells.

In terms of biological role, involved in oxygen transport from the lung to the various peripheral tissues. This chain is Hemoglobin subunit alpha-D (HBAD), found in Phalacrocorax carbo (Great cormorant).